Reading from the N-terminus, the 151-residue chain is uncharacterized protein (151 aa).

This is an uncharacterized protein from Lepidoptera (butterflies and moths).